Reading from the N-terminus, the 727-residue chain is MAFQKAVKGTILVGGGALATVLGLSPFAHYRRKQVSLAYVEAAGYLTEPVNREPPSREAQLMTLKNTPEFDILVIGGGATGCGCALDAVTRGLKTALVERDDFSSGTSSRSTKLIHGGVRYLQKAIMNLDVEQYRMVKEALHERANLLEIAPHLSAPLPIMLPLYKWWQLPYYWVGIKMYDLVAGSQCLKSSYVLSKSRALEHFPMLQKDKLVGAIVYYDGQHNDARMNLAIALTAARYGAATANYMEVVSLLKKTDPETGKERVSGARCKDVLTGQEFDVRAKCVINASGPFTDSVRKMDDKNVVPICQPSAGVHIVMPGYYSPENMGLLDPATSDGRVIFFLPWEKMTIAGTTDTPTDVTHHPIPSEEDINFILNEVRNYLSSDVEVRRGDVLAAWSGIRPLVTDPKSADTQSISRNHVVDISDSGLITIAGGKWTTYRSMAEDTVDAAVKFHNLNAGPSRTVGLFLQGGKDWSPTLYIRLVQDYGLESEVAQHLAKTYGDKAFEVAKMASVTGKRWPVVGVRLVSEFPYIEAEVKYGIKEYACTAVDMISRRTRLAFLNVQAAEEALPRIVELMGRELNWSELRKQEELETATRFLYYEMGYKSRTEQLTDSTEISLLPSDIDRYKKRFHKFDEDEKGFITIVDVQRVLESINVQMDENTLHEILCEVDLNKNGQVELHEFLQLMSAVQKGRVSGSRLAILMKTAEENLDRRVPIPVDRSCGGL.

Residues 1–42 (MAFQKAVKGTILVGGGALATVLGLSPFAHYRRKQVSLAYVEA) constitute a mitochondrion transit peptide. 71–99 (DILVIGGGATGCGCALDAVTRGLKTALVE) contributes to the FAD binding site. Tyr-601 bears the Phosphotyrosine mark. 2 consecutive EF-hand domains span residues 623–658 (SDID…INVQ) and 659–694 (MDEN…VQKG). Ca(2+)-binding residues include Asp-672, Asn-674, Asn-676, Gln-678, and Glu-683.

It belongs to the FAD-dependent glycerol-3-phosphate dehydrogenase family. FAD is required as a cofactor.

It is found in the mitochondrion inner membrane. The enzyme catalyses a quinone + sn-glycerol 3-phosphate = dihydroxyacetone phosphate + a quinol. It participates in polyol metabolism; glycerol degradation via glycerol kinase pathway; glycerone phosphate from sn-glycerol 3-phosphate (anaerobic route): step 1/1. With respect to regulation, calcium-binding enhance the activity of the enzyme. Its function is as follows. Calcium-responsive mitochondrial glycerol-3-phosphate dehydrogenase which seems to be a key component of the pancreatic beta-cell glucose-sensing device. This Mus musculus (Mouse) protein is Glycerol-3-phosphate dehydrogenase, mitochondrial.